Reading from the N-terminus, the 79-residue chain is Large ribosomal subunit protein uL24 (79 aa).

It belongs to the universal ribosomal protein uL24 family. In terms of assembly, part of the 50S ribosomal subunit.

One of two assembly initiator proteins, it binds directly to the 5'-end of the 23S rRNA, where it nucleates assembly of the 50S subunit. Functionally, one of the proteins that surrounds the polypeptide exit tunnel on the outside of the subunit. The polypeptide is Large ribosomal subunit protein uL24 (Lactobacillus johnsonii (strain CNCM I-12250 / La1 / NCC 533)).